The chain runs to 436 residues: 23S rRNA (uracil(1939)-C(5))-methyltransferase RlmD (436 aa).

One can recognise a TRAM domain in the interval 10 to 68 (KQKTTQKIVAEIQDLDYQGLGVAKIQGKTWFIENALPTEKVEAVVTDEKRQYGLATAQK). Residues C81, C87, C90, and C168 each contribute to the [4Fe-4S] cluster site. Residues Q270, F299, N304, E320, D347, and D368 each contribute to the S-adenosyl-L-methionine site. C394 (nucleophile) is an active-site residue.

It belongs to the class I-like SAM-binding methyltransferase superfamily. RNA M5U methyltransferase family. RlmD subfamily.

It catalyses the reaction uridine(1939) in 23S rRNA + S-adenosyl-L-methionine = 5-methyluridine(1939) in 23S rRNA + S-adenosyl-L-homocysteine + H(+). Its function is as follows. Catalyzes the formation of 5-methyl-uridine at position 1939 (m5U1939) in 23S rRNA. The sequence is that of 23S rRNA (uracil(1939)-C(5))-methyltransferase RlmD from Haemophilus parainfluenzae (strain T3T1).